Reading from the N-terminus, the 489-residue chain is Tripartite motif-containing protein 10 (489 aa).

The segment at 16–61 (CPVCQGTLREPVTIDCGHNFCRVCLTRYLEITSPDPEEPPTCPLCK) adopts an RING-type zinc-finger fold. The segment at 94-135 (DEEDVCPEHGEKVYFFCEDDEMQLCVVCREAWEHRAHTVRFL) adopts a B box-type zinc-finger fold. Zn(2+) is bound by residues Cys-99, His-102, Cys-121, and His-127. Residues 142–245 (YREQIQKCLE…IEELEEKKER (104 aa)) adopt a coiled-coil conformation. The B30.2/SPRY domain maps to 292–486 (REMKMFLEKL…FSLSSQEGAA (195 aa)).

This sequence belongs to the TRIM/RBCC family. Interacts with IFNAR1; this interaction prevents association of IFNAR1 with TYK2.

It localises to the cytoplasm. Its function is as follows. E3 ligase that plays an essential role in the differentiation and survival of terminal erythroid cells. May directly bind to PTEN and promote its ubiquitination, resulting in its proteasomal degradation and activation of hypertrophic signaling. In addition, plays a role in immune response regulation by repressing the phosphorylation of STAT1 and STAT2 in the interferon/JAK/STAT signaling pathway independent of its E3 ligase activity. Mechanistically, interacts with the intracellular domain of IFNAR1 and thereby inhibits the association between TYK2 and IFNAR1. In Bos taurus (Bovine), this protein is Tripartite motif-containing protein 10 (TRIM10).